A 578-amino-acid polypeptide reads, in one-letter code: MRNEEAEKLFWIFNNKVRPINYSEIVENTTPRKSSINREKIESENNGQVYNELFFFKLLLNEDLSKFLISLINTNLRHEREKKLDKGKDISRLNDLTDITFWKFITDYLKNIYSNKNNDKIPPELINLKMMDHNRYSAVHNVLDMKSHRFEEYCEIFMNSALKYINIGNVLNCDETIYAYYGKDAIKDHILINNDSKPHSVGIEAYSLTTKLNISNCPYVISYGPRTPENCQSPFNSLKTLLDNLHSKYNWEDPRNNLIVCCDSAFALVNNKECLDELKCRILSSTRKSGVTVPQEIKIFVKPLLTIHKTFLFYDESTGLLYEYTKNTAGHINCIATNLYSRYSNPYVEINNNLNIEQFATIGNLFRFSKKELELIFVGETLHGTTLEILNGKYKTNFVKPPCGPFWNEQMLKKLSAEHIAQIYNDKYKKENNNLNKNDKIKKILEPLDSTQDGGIYDKNKNYSKKELQDLKIKVIGTHQNRSQMIHDQYIFWYNLVDITDKRYYATIRGSSSHSYTKLFILGGLFDLILNSYSLHREYHEMELECKNPENQPPEIIQTINKFVESLIFQFHELKELQ.

Its function is as follows. Involved in regulation of group size of aggregation streams. This Dictyostelium discoideum (Social amoeba) protein is Suppressor of smlA (sslA1).